Here is a 474-residue protein sequence, read N- to C-terminus: 6-phospho-beta-galactosidase (474 aa).

Positions 18, 115, 159, 160, and 296 each coordinate D-galactose 6-phosphate. Catalysis depends on E160, which acts as the Proton donor. E374 acts as the Nucleophile in catalysis. D-galactose 6-phosphate-binding residues include S427, W428, K434, and Y436.

Belongs to the glycosyl hydrolase 1 family.

The catalysed reaction is a 6-phospho-beta-D-galactoside + H2O = D-galactose 6-phosphate + an alcohol. It functions in the pathway carbohydrate metabolism; lactose degradation; D-galactose 6-phosphate and beta-D-glucose from lactose 6-phosphate: step 1/1. The polypeptide is 6-phospho-beta-galactosidase (Clostridium acetobutylicum (strain ATCC 824 / DSM 792 / JCM 1419 / IAM 19013 / LMG 5710 / NBRC 13948 / NRRL B-527 / VKM B-1787 / 2291 / W)).